We begin with the raw amino-acid sequence, 528 residues long: Importin subunit alpha-2 (528 aa).

Over residues 1–15 (MADDSASPSPSSASP) the composition is skewed to low complexity. The disordered stretch occupies residues 1 to 36 (MADDSASPSPSSASPLQHHREALKSSVRNTAASRRR). ARM repeat units follow at residues 125-165 (VPLV…NIAA), 167-206 (EPEE…NVAG), 209-248 (AELR…NLIK), 253-292 (KAAN…YLSA), 294-335 (SDRG…NLIA), 338-383 (DYMV…NIAA), 386-425 (FEHK…NLCV), and 438-477 (VEHL…LVMR).

This sequence belongs to the importin alpha family. As to quaternary structure, forms a complex with importin subunit beta-1. The whole complex, most stable and composed of importin alpha, importin beta and NLS substrate, is referred to as PTAC or pore targeting complex. Expressed in root, callus, and etiolated leaf. Low expression in green leaf.

The protein localises to the cytoplasm. Its subcellular location is the perinuclear region. Its function is as follows. Binds specifically and directly to substrates containing either a simple or bipartite NLS motif. Promotes docking of import substrates to the nuclear envelope. The sequence is that of Importin subunit alpha-2 from Oryza sativa subsp. japonica (Rice).